The sequence spans 125 residues: Small ribosomal subunit protein bS6 (125 aa).

It belongs to the bacterial ribosomal protein bS6 family.

Its function is as follows. Binds together with bS18 to 16S ribosomal RNA. The protein is Small ribosomal subunit protein bS6 of Campylobacter jejuni subsp. jejuni serotype O:23/36 (strain 81-176).